A 334-amino-acid chain; its full sequence is DCN1-like protein 3 (334 aa).

Residues 112 to 301 (VSHQTLSKLF…LFDDFVDYEK (190 aa)) form the DCUN1 domain. The segment at 308 to 334 (SGIHDDDNNNDDPLQSHVKAEDPGLVS) is disordered. Residues 325–334 (VKAEDPGLVS) are compositionally biased toward basic and acidic residues.

It localises to the cell membrane. Functionally, promotes neddylation of cullin components of SCF-type E3 ubiquitin ligase complexes and thus regulates SCF-type complex activity. Function promotes cell proliferation. The sequence is that of DCN1-like protein 3 from Drosophila melanogaster (Fruit fly).